A 229-amino-acid polypeptide reads, in one-letter code: Lipoprotein-releasing system ATP-binding protein LolD (229 aa).

The 224-residue stretch at 6-229 folds into the ABC transporter domain; the sequence is LELDAIERTY…DGHLTPYVPA (224 aa). 42–49 contacts ATP; that stretch reads GPSGSGKS.

It belongs to the ABC transporter superfamily. Lipoprotein translocase (TC 3.A.1.125) family. As to quaternary structure, the complex is composed of two ATP-binding proteins (LolD) and two transmembrane proteins (LolC and LolE).

It localises to the cell inner membrane. In terms of biological role, part of the ABC transporter complex LolCDE involved in the translocation of mature outer membrane-directed lipoproteins, from the inner membrane to the periplasmic chaperone, LolA. Responsible for the formation of the LolA-lipoprotein complex in an ATP-dependent manner. This Maricaulis maris (strain MCS10) (Caulobacter maris) protein is Lipoprotein-releasing system ATP-binding protein LolD.